Consider the following 360-residue polypeptide: C-C chemokine receptor type 4 (360 aa).

Topologically, residues 1–39 (MNATEVTDTTQDETVYNSYYFYESMPKPCTKEGIKAFGE) are extracellular. The N-linked (GlcNAc...) asparagine glycan is linked to asparagine 2. The chain crosses the membrane as a helical span at residues 40-67 (VFLPPLYSLVFLLGLFGNSVVVLVLFKY). Residues 68-77 (KRLKSMTDVY) lie on the Cytoplasmic side of the membrane. A helical membrane pass occupies residues 78-98 (LLNLAISDLLFVLSLPFWGYY). At 99–111 (AADQWVFGLGLCK) the chain is on the extracellular side. Cysteine 110 and cysteine 187 are disulfide-bonded. A helical transmembrane segment spans residues 112 to 133 (IVSWMYLVGFYSGIFFIMLMSI). At 134–150 (DRYLAIVHAVFSLKART) the chain is on the cytoplasmic side. A helical membrane pass occupies residues 151–175 (LTYGVITSLITWSVAVFASLPGLLF). The Extracellular segment spans residues 176–206 (STCYTEHNHTYCKTQYSVNSTTWKVLSSLEI). 2 N-linked (GlcNAc...) asparagine glycosylation sites follow: asparagine 183 and asparagine 194. A helical transmembrane segment spans residues 207–226 (NVLGLLIPLGIMLFCYSMII). Topologically, residues 227–242 (RTLQHCKNEKKNRAVR) are cytoplasmic. The chain crosses the membrane as a helical span at residues 243-267 (MIFAVVVLFLGFWTPYNVVLFLETL). At 268 to 284 (VELEVLQDCTLERYLDY) the chain is on the extracellular side. The chain crosses the membrane as a helical span at residues 285–308 (AIQATETLAFIHCCLNPVIYFFLG). Residues 309–360 (EKFRKYITQLFRTCRGPLVLCKHCDFLQVYSADMSSSSYTQSTVDHDFRDAL) lie on the Cytoplasmic side of the membrane.

It belongs to the G-protein coupled receptor 1 family. In natural killer cells, CCL22 binding induces phosphorylation on yet undefined Ser/Thr residues, most probably by beta-adrenergic receptor kinases 1 and 2. In terms of tissue distribution, expressed in the thymus, macrophages and T- and B-cells.

Its subcellular location is the cell membrane. In terms of biological role, high affinity receptor for the C-C type chemokines CCL17/TARC and CCL22/MDC. The activity of this receptor is mediated by G(i) proteins which activate a phosphatidylinositol-calcium second messenger system. Could play a role in lipopolysaccharide (LPS)-induced endotoxic shock. In the CNS, could mediate hippocampal-neuron survival. The sequence is that of C-C chemokine receptor type 4 (Ccr4) from Mus musculus (Mouse).